A 429-amino-acid chain; its full sequence is DNA primase DnaG (429 aa).

Residues 172–246 (DSIIVVEGRN…DVDFIARAPP (75 aa)) enclose the Toprim domain. Residues Glu-178, Asp-220, and Asp-222 each contribute to the Mg(2+) site. Residues 287-322 (RNTKELEERQGNELKNERPEKINENEESEKNVELKE) are disordered.

The protein belongs to the archaeal DnaG primase family. As to quaternary structure, forms a ternary complex with MCM helicase and DNA. Component of the archaeal exosome complex. Requires Mg(2+) as cofactor.

It carries out the reaction ssDNA + n NTP = ssDNA/pppN(pN)n-1 hybrid + (n-1) diphosphate.. In terms of biological role, RNA polymerase that catalyzes the synthesis of short RNA molecules used as primers for DNA polymerase during DNA replication. Also part of the exosome, which is a complex involved in RNA degradation. Acts as a poly(A)-binding protein that enhances the interaction between heteromeric, adenine-rich transcripts and the exosome. The polypeptide is DNA primase DnaG (Picrophilus torridus (strain ATCC 700027 / DSM 9790 / JCM 10055 / NBRC 100828 / KAW 2/3)).